The sequence spans 119 residues: Small ribosomal subunit protein uS10 (119 aa).

Position 2 is an N-acetylalanine (Ala2). Lys4 is covalently cross-linked (Glycyl lysine isopeptide (Lys-Gly) (interchain with G-Cter in ubiquitin)). At Lys8 the chain carries N6-succinyllysine; alternate. Residue Lys8 forms a Glycyl lysine isopeptide (Lys-Gly) (interchain with G-Cter in ubiquitin); alternate linkage. The residue at position 9 (Thr9) is a Phosphothreonine. An N6-acetyllysine mark is found at Lys34 and Lys75. Residue Ser93 is modified to Phosphoserine.

Belongs to the universal ribosomal protein uS10 family. In terms of assembly, component of the 40S small ribosomal subunit. In terms of processing, polyubiquitinated by ZNF598 via 'Lys-63'-linked ubiquitin chains when a ribosome has stalled, initiating the ribosome quality control (RQC) pathway to degrade the potentially detrimental aberrant nascent polypeptide. Deubiquitinated by OTUD3 and USP21, antagonizing ZNF598 activity. Post-translationally, ufmylated by UFL1.

The protein resides in the cytoplasm. In terms of biological role, component of the small ribosomal subunit. The ribosome is a large ribonucleoprotein complex responsible for the synthesis of proteins in the cell. The chain is Small ribosomal subunit protein uS10 (RPS20) from Pongo abelii (Sumatran orangutan).